Here is a 299-residue protein sequence, read N- to C-terminus: uncharacterized protein (299 aa).

Active-site charge relay system residues include Thr47 and Tyr109. The Proton donor role is filled by Tyr138. The Schiff-base intermediate with substrate role is filled by Lys168.

Belongs to the DapA family. In terms of assembly, homotetramer.

It localises to the cytoplasm. This is an uncharacterized protein from Chloroflexus aurantiacus (strain ATCC 29366 / DSM 635 / J-10-fl).